The following is a 179-amino-acid chain: Small ribosomal subunit protein uS5 (179 aa).

Residues 22 to 85 form the S5 DRBM domain; sequence MIEKLVAVNR…EYARKRMSNV (64 aa).

The protein belongs to the universal ribosomal protein uS5 family. Part of the 30S ribosomal subunit. Contacts proteins S4 and S8.

Functionally, with S4 and S12 plays an important role in translational accuracy. Located at the back of the 30S subunit body where it stabilizes the conformation of the head with respect to the body. This is Small ribosomal subunit protein uS5 from Xylella fastidiosa (strain M23).